We begin with the raw amino-acid sequence, 93 residues long: Acylphosphatase (93 aa).

An Acylphosphatase-like domain is found at 6–93 (RAHVFISGRV…GEERGFSIIW (88 aa)). Residues Arg-21 and Asn-39 contribute to the active site.

It belongs to the acylphosphatase family.

The catalysed reaction is an acyl phosphate + H2O = a carboxylate + phosphate + H(+). The chain is Acylphosphatase (acyP) from Roseiflexus sp. (strain RS-1).